The primary structure comprises 141 residues: Mu-like prophage FluMu protein gp36 (141 aa).

The protein to phage Mu protein gp36.

The sequence is that of Mu-like prophage FluMu protein gp36 from Haemophilus influenzae (strain ATCC 51907 / DSM 11121 / KW20 / Rd).